We begin with the raw amino-acid sequence, 362 residues long: Heat-inducible transcription repressor HrcA (362 aa).

It belongs to the HrcA family.

Its function is as follows. Negative regulator of class I heat shock genes (grpE-dnaK-dnaJ and groELS operons). Prevents heat-shock induction of these operons. The polypeptide is Heat-inducible transcription repressor HrcA (Rhodopseudomonas palustris (strain BisB18)).